The following is a 412-amino-acid chain: Lysosomal phospholipase A and acyltransferase (412 aa).

A signal peptide spans methionine 1 to proline 33. A substrate-binding site is contributed by aspartate 46. Cysteine 65 and cysteine 89 are disulfide-bonded. A glycan (N-linked (GlcNAc...) asparagine) is linked at asparagine 99. Residue serine 198 is the Acyl-ester intermediate of the active site. Residue serine 198 participates in Zn(2+) binding. Methionine 199 contacts substrate. N-linked (GlcNAc...) asparagine glycosylation is found at asparagine 273 and asparagine 289. 2 residues coordinate Zn(2+): aspartate 340 and cysteine 355. Catalysis depends on charge relay system residues aspartate 360 and histidine 392. Residue histidine 392 coordinates Zn(2+). An N-linked (GlcNAc...) asparagine glycan is attached at asparagine 398.

This sequence belongs to the AB hydrolase superfamily. Lipase family. In terms of processing, N-glycosylated. N-glycosylation is important for maturation of the enzyme and normal subcellular location. As to expression, detected in blood plasma (at protein level). Ubiquitous. Highly expressed in heart, placenta, skeletal muscle, kidney and pancreas. Detected at lower levels in spleen, thymus, prostate, testis, ovary, small intestine, colon and peripheral blood leukocytes.

It localises to the lysosome. The protein resides in the secreted. It is found in the membrane. The catalysed reaction is a 1,2-diacyl-sn-glycero-3-phosphocholine + H2O = a 2-acyl-sn-glycero-3-phosphocholine + a fatty acid + H(+). It carries out the reaction 1-hexadecanoyl-2-(9Z-octadecenoyl)-sn-glycero-3-phosphocholine + H2O = 2-(9Z-octadecenoyl)-sn-glycero-3-phosphocholine + hexadecanoate + H(+). The enzyme catalyses 1-hexadecanoyl-2-glutaroyl-sn-glycero-3-phosphocholine + H2O = 2-glutaroyl-sn-glycero-3-phosphocholine + hexadecanoate + H(+). It catalyses the reaction 1-hexadecanoyl-2-nonadioyl-sn-glycero-3-phosphocholine + H2O = 2-nonadioyl-sn-glycero-3-phosphocholine + hexadecanoate + H(+). The catalysed reaction is 1-hexadecanoyl-2-(5-oxopentanoyl)-sn-glycero-3-phosphocholine + H2O = 2-(5-oxopentanoyl)-sn-glycero-3-phosphocholine + hexadecanoate + H(+). It carries out the reaction 1-hexadecanoyl-2-(9-oxononanoyl)-sn-glycero-3-phosphocholine + H2O = 2-(9-oxononanoyl)-sn-glycero-3-phosphocholine + hexadecanoate + H(+). The enzyme catalyses 1,2-dihexadecanoyl-sn-glycero-3-phosphocholine + H2O = 2-hexadecanoyl-sn-glycero-3-phosphocholine + hexadecanoate + H(+). It catalyses the reaction a 1,2-diacyl-sn-glycero-3-phosphocholine + H2O = a 1-acyl-sn-glycero-3-phosphocholine + a fatty acid + H(+). The catalysed reaction is 1,2-di-(9Z-octadecenoyl)-sn-glycero-3-phosphocholine + H2O = 1-(9Z-octadecenoyl)-sn-glycero-3-phosphocholine + (9Z)-octadecenoate + H(+). It carries out the reaction 1-hexadecanoyl-2-(9Z-octadecenoyl)-sn-glycero-3-phosphocholine + H2O = 1-hexadecanoyl-sn-glycero-3-phosphocholine + (9Z)-octadecenoate + H(+). The enzyme catalyses 1,2-dihexadecanoyl-sn-glycero-3-phosphocholine + H2O = 1-hexadecanoyl-sn-glycero-3-phosphocholine + hexadecanoate + H(+). It catalyses the reaction a 1-acyl-sn-glycero-3-phosphocholine + H2O = sn-glycerol 3-phosphocholine + a fatty acid + H(+). The catalysed reaction is 1-hexadecanoyl-sn-glycero-3-phosphocholine + H2O = sn-glycerol 3-phosphocholine + hexadecanoate + H(+). It carries out the reaction N-(acetyl)-sphing-4-enine + a 1,2-diacyl-sn-glycero-3-phosphoethanolamine = 1-O-acyl-N-(acetyl)-sphing-4-enine + a 2-acyl-sn-glycero-3-phosphoethanolamine. The enzyme catalyses 1-hexadecanoyl-2-(9Z-octadecenoyl)-sn-glycero-3-phosphoethanolamine + N-(acetyl)-sphing-4-enine = 2-(9Z-octadecenoyl)-sn-glycero-3-phosphoethanolamine + 1-hexadecanoyl-N-(acetyl)-sphing-4-enine. It catalyses the reaction 1-hexadecanoyl-2-(9Z,12Z-octadecadienoyl)-sn-glycero-3-phosphoethanolamine + N-(acetyl)-sphing-4-enine = 2-(9Z,12Z)-octadecadienoyl-sn-glycero-3-phosphoethanolamine + 1-hexadecanoyl-N-(acetyl)-sphing-4-enine. The catalysed reaction is 1-hexadecanoyl-2-(5Z,8Z,11Z,14Z-eicosatetraenoyl)-sn-glycero-3-phosphoethanolamine + N-(acetyl)-sphing-4-enine = 2-(5Z,8Z,11Z,14Z)-eicosatetraenoyl-sn-glycero-3-phosphoethanolamine + 1-hexadecanoyl-N-(acetyl)-sphing-4-enine. It carries out the reaction N-(acetyl)-sphing-4-enine + a 1,2-diacyl-sn-glycero-3-phosphoethanolamine = 1-O-acyl-N-(acetyl)-sphing-4-enine + a 1-acyl-sn-glycero-3-phosphoethanolamine. The enzyme catalyses 1-hexadecanoyl-2-(9Z-octadecenoyl)-sn-glycero-3-phosphoethanolamine + N-(acetyl)-sphing-4-enine = 1-(9Z-octadecenoyl)-N-(acetyl)-sphing-4-enine + 1-hexadecanoyl-sn-glycero-3-phosphoethanolamine. It catalyses the reaction 1-hexadecanoyl-2-(9Z,12Z-octadecadienoyl)-sn-glycero-3-phosphoethanolamine + N-(acetyl)-sphing-4-enine = 1-(9Z,12Z-octadecadienoyl)-N-acetylsphing-4-enine + 1-hexadecanoyl-sn-glycero-3-phosphoethanolamine. The catalysed reaction is 1-hexadecanoyl-2-(5Z,8Z,11Z,14Z-eicosatetraenoyl)-sn-glycero-3-phosphoethanolamine + N-(acetyl)-sphing-4-enine = 1-(5Z,8Z,11Z,14Z)-eicosatetraenoyl-N-(acetyl)-sphing-4-enine + 1-hexadecanoyl-sn-glycero-3-phosphoethanolamine. It carries out the reaction N-(acetyl)-sphing-4-enine + a 1,2-diacyl-sn-glycero-3-phosphocholine = 1-O-acyl-N-(acetyl)-sphing-4-enine + a 1-acyl-sn-glycero-3-phosphocholine. The enzyme catalyses 1-hexadecanoyl-2-(9Z-octadecenoyl)-sn-glycero-3-phosphocholine + N-(acetyl)-sphing-4-enine = 1-(9Z-octadecenoyl)-N-(acetyl)-sphing-4-enine + 1-hexadecanoyl-sn-glycero-3-phosphocholine. It catalyses the reaction 1-hexadecanoyl-2-(9Z,12Z-octadecadienoyl)-sn-glycero-3-phosphocholine + N-(acetyl)-sphing-4-enine = 1-(9Z,12Z-octadecadienoyl)-N-acetylsphing-4-enine + 1-hexadecanoyl-sn-glycero-3-phosphocholine. The catalysed reaction is 1-hexadecanoyl-2-(5Z,8Z,11Z,14Z-eicosatetraenoyl)-sn-glycero-3-phosphocholine + N-(acetyl)-sphing-4-enine = 1-(5Z,8Z,11Z,14Z)-eicosatetraenoyl-N-(acetyl)-sphing-4-enine + 1-hexadecanoyl-sn-glycero-3-phosphocholine. It carries out the reaction 1-hexadecanoyl-2-(4Z,7Z,10Z,13Z,16Z,19Z-docosahexaenoyl)-sn-glycero-3-phosphocholine + N-(acetyl)-sphing-4-enine = 1-(4Z,7Z,10Z,13Z,16Z,19Z-docosahexaenoyl)-N-(acetyl)-sphing-4-enine + 1-hexadecanoyl-sn-glycero-3-phosphocholine. The enzyme catalyses 1-octadecanoyl-2-(9Z-octadecenoyl)-sn-glycero-3-phosphocholine + N-(acetyl)-sphing-4-enine = 1-(9Z-octadecenoyl)-N-(acetyl)-sphing-4-enine + 1-octadecanoyl-sn-glycero-3-phosphocholine. It catalyses the reaction 1-octadecanoyl-2-(9Z,12Z)-octadecadienoyl-sn-glycero-3-phosphocholine + N-(acetyl)-sphing-4-enine = 1-(9Z,12Z-octadecadienoyl)-N-acetylsphing-4-enine + 1-octadecanoyl-sn-glycero-3-phosphocholine. The catalysed reaction is 1-octadecanoyl-2-(5Z,8Z,11Z,14Z-eicosatetraenoyl)-sn-glycero-3-phosphocholine + N-(acetyl)-sphing-4-enine = 1-(5Z,8Z,11Z,14Z)-eicosatetraenoyl-N-(acetyl)-sphing-4-enine + 1-octadecanoyl-sn-glycero-3-phosphocholine. It carries out the reaction 1-(9Z-octadecenoyl)-2-hexadecanoyl-sn-glycero-3-phosphocholine + N-(acetyl)-sphing-4-enine = 1-hexadecanoyl-N-(acetyl)-sphing-4-enine + 1-(9Z-octadecenoyl)-sn-glycero-3-phosphocholine. The enzyme catalyses 1-(9Z)-octadecenoyl-2-octadecanoyl-sn-glycero-3-phosphocholine + N-(acetyl)-sphing-4-enine = 1-octadecanoyl-N-(acetyl)-sphing-4-enine + 1-(9Z-octadecenoyl)-sn-glycero-3-phosphocholine. It catalyses the reaction 1,2-di-(9Z-octadecenoyl)-sn-glycero-3-phosphocholine + N-(acetyl)-sphing-4-enine = 1-(9Z-octadecenoyl)-N-(acetyl)-sphing-4-enine + 1-(9Z-octadecenoyl)-sn-glycero-3-phosphocholine. The catalysed reaction is N-(acetyl)-sphing-4-enine + a 1,2-diacyl-sn-glycero-3-phosphocholine = 1-O-acyl-N-(acetyl)-sphing-4-enine + a 2-acyl-sn-glycero-3-phosphocholine. It carries out the reaction 1-hexadecanoyl-2-(9Z-octadecenoyl)-sn-glycero-3-phosphocholine + N-(acetyl)-sphing-4-enine = 1-hexadecanoyl-N-(acetyl)-sphing-4-enine + 2-(9Z-octadecenoyl)-sn-glycero-3-phosphocholine. The enzyme catalyses 1-hexadecanoyl-2-(9Z,12Z-octadecadienoyl)-sn-glycero-3-phosphocholine + N-(acetyl)-sphing-4-enine = 2-(9Z,12Z-octadecadienoyl)-sn-glycero-3-phosphocholine + 1-hexadecanoyl-N-(acetyl)-sphing-4-enine. It catalyses the reaction 1-hexadecanoyl-2-(5Z,8Z,11Z,14Z-eicosatetraenoyl)-sn-glycero-3-phosphocholine + N-(acetyl)-sphing-4-enine = 1-hexadecanoyl-N-(acetyl)-sphing-4-enine + 2-(5Z,8Z,11Z,14Z)-eicosatetraenoyl-sn-glycero-3-phosphocholine. The catalysed reaction is 1-hexadecanoyl-2-(4Z,7Z,10Z,13Z,16Z,19Z-docosahexaenoyl)-sn-glycero-3-phosphocholine + N-(acetyl)-sphing-4-enine = 2-(4Z,7Z,10Z,13Z,16Z,19Z-docosahexaenoyl)-sn-glycero-3-phosphocholine + 1-hexadecanoyl-N-(acetyl)-sphing-4-enine. It carries out the reaction 1-hexadecanoyl-2-nonadioyl-sn-glycero-3-phosphocholine + N-(acetyl)-sphing-4-enine = 2-nonadioyl-sn-glycero-3-phosphocholine + 1-hexadecanoyl-N-(acetyl)-sphing-4-enine. The enzyme catalyses 1-octadecanoyl-2-(9Z-octadecenoyl)-sn-glycero-3-phosphocholine + N-(acetyl)-sphing-4-enine = 1-octadecanoyl-N-(acetyl)-sphing-4-enine + 2-(9Z-octadecenoyl)-sn-glycero-3-phosphocholine. It catalyses the reaction 1-octadecanoyl-2-(5Z,8Z,11Z,14Z-eicosatetraenoyl)-sn-glycero-3-phosphocholine + N-(acetyl)-sphing-4-enine = 1-octadecanoyl-N-(acetyl)-sphing-4-enine + 2-(5Z,8Z,11Z,14Z)-eicosatetraenoyl-sn-glycero-3-phosphocholine. The catalysed reaction is 1-(9Z-octadecenoyl)-2-hexadecanoyl-sn-glycero-3-phosphocholine + N-(acetyl)-sphing-4-enine = 1-(9Z-octadecenoyl)-N-(acetyl)-sphing-4-enine + 2-hexadecanoyl-sn-glycero-3-phosphocholine. It carries out the reaction 1-(9Z)-octadecenoyl-2-octadecanoyl-sn-glycero-3-phosphocholine + N-(acetyl)-sphing-4-enine = 2-octadecanoyl-sn-glycero-3-phosphocholine + 1-(9Z-octadecenoyl)-N-(acetyl)-sphing-4-enine. The enzyme catalyses a 1,2-diacyl-sn-glycero-3-phospho-L-serine + N-(acetyl)-sphing-4-enine = a 2-acyl-sn-glycero-3-phospho-L-serine + 1-O-acyl-N-(acetyl)-sphing-4-enine. It catalyses the reaction 1-octadecanoyl-2-(9Z-octadecenoyl)-sn-glycero-3-phospho-L-serine + N-(acetyl)-sphing-4-enine = 2-(9Z-octadecenoyl)-sn-glycero-3-phospho-L-serine + 1-octadecanoyl-N-(acetyl)-sphing-4-enine. The catalysed reaction is a 1,2-diacyl-sn-glycero-3-phospho-L-serine + N-(acetyl)-sphing-4-enine = 1-O-acyl-N-(acetyl)-sphing-4-enine + a 1-acyl-sn-glycero-3-phospho-L-serine. It carries out the reaction 1-octadecanoyl-2-(9Z-octadecenoyl)-sn-glycero-3-phospho-L-serine + N-(acetyl)-sphing-4-enine = 1-octadecanoyl-sn-glycero-3-phosphoserine + 1-(9Z-octadecenoyl)-N-(acetyl)-sphing-4-enine. The enzyme catalyses a 1,2-diacyl-sn-glycero-3-phospho-(1'-sn-glycerol) + N-(acetyl)-sphing-4-enine = 2-acyl-sn-glycero-3-phospho-(1'-sn-glycerol) + 1-O-acyl-N-(acetyl)-sphing-4-enine. It catalyses the reaction 1-octadecanoyl-2-(9Z-octadecenoyl)-sn-glycero-3-phospho-(1'-sn-glycerol) + N-(acetyl)-sphing-4-enine = 2-(9Z-octadecenoyl)-sn-glycero-3-phospho-(1'-sn-glycerol) + 1-octadecanoyl-N-(acetyl)-sphing-4-enine. The catalysed reaction is a 1,2-diacyl-sn-glycero-3-phospho-(1'-sn-glycerol) + N-(acetyl)-sphing-4-enine = 1-O-acyl-N-(acetyl)-sphing-4-enine + 1-acyl-sn-glycero-3-phospho-(1'-sn-glycerol). It carries out the reaction 1-octadecanoyl-2-(9Z-octadecenoyl)-sn-glycero-3-phospho-(1'-sn-glycerol) + N-(acetyl)-sphing-4-enine = 1-octadecanoyl-sn-glycero-3-phospho-(1'-sn-glycerol) + 1-(9Z-octadecenoyl)-N-(acetyl)-sphing-4-enine. The enzyme catalyses an N-acylethanolamine + a 1,2-diacyl-sn-glycero-3-phosphocholine = 2-(acylamino)ethyl fatty acid + a 2-acyl-sn-glycero-3-phosphocholine. It catalyses the reaction an N-acylethanolamine + a 1,2-diacyl-sn-glycero-3-phosphocholine = 2-(acylamino)ethyl fatty acid + a 1-acyl-sn-glycero-3-phosphocholine. The catalysed reaction is N-(5Z,8Z,11Z,14Z-eicosatetraenoyl)-ethanolamine + 1,2-di-(9Z-octadecenoyl)-sn-glycero-3-phosphocholine = 2-[(5Z,8Z,11Z,14Z)-eicosatetraenoylamino]ethyl (9Z)-octadecenoate + (9Z-octadecenoyl)-sn-glycero-3-phosphocholine. It carries out the reaction N-(9Z-octadecenoyl) ethanolamine + 1,2-di-(9Z-octadecenoyl)-sn-glycero-3-phosphocholine = 2-[(9Z)-octadecenoylamino]ethyl (9Z)-octadecenoate + (9Z-octadecenoyl)-sn-glycero-3-phosphocholine. The enzyme catalyses a 3-acyl-sn-glycerol + a 1,2-diacyl-sn-glycero-3-phosphocholine = a 1,3-diacylglycerol + a 1-acyl-sn-glycero-3-phosphocholine. It catalyses the reaction a 3-acyl-sn-glycerol + a 1,2-diacyl-sn-glycero-3-phosphocholine = a 1,3-diacylglycerol + a 2-acyl-sn-glycero-3-phosphocholine. The catalysed reaction is 3-(9Z-octadecenoyl)-sn-glycerol + 1,2-di-(9Z-octadecenoyl)-sn-glycero-3-phosphocholine = 1,3-di-(9Z-octadecenoyl)-glycerol + (9Z-octadecenoyl)-sn-glycero-3-phosphocholine. It carries out the reaction 3-hexadecanoyl-sn-glycerol + 1,2-di-(9Z-octadecenoyl)-sn-glycero-3-phosphocholine = 1-(9Z)-octadecenoyl-3-hexadecanoyl-sn-glycerol + (9Z-octadecenoyl)-sn-glycero-3-phosphocholine. The enzyme catalyses a 1-acyl-sn-glycerol + a 1,2-diacyl-sn-glycero-3-phosphocholine = a 1,3-diacylglycerol + a 2-acyl-sn-glycero-3-phosphocholine. It catalyses the reaction a 1-acyl-sn-glycerol + a 1,2-diacyl-sn-glycero-3-phosphocholine = a 1,3-diacylglycerol + a 1-acyl-sn-glycero-3-phosphocholine. The catalysed reaction is 1-(9Z-octadecenoyl)-sn-glycerol + 1,2-di-(9Z-octadecenoyl)-sn-glycero-3-phosphocholine = 1,3-di-(9Z-octadecenoyl)-glycerol + (9Z-octadecenoyl)-sn-glycero-3-phosphocholine. It carries out the reaction 1-hexadecanoyl-sn-glycerol + 1,2-di-(9Z-octadecenoyl)-sn-glycero-3-phosphocholine = 1-hexadecanoyl-3-(9Z)-octadecenoyl-sn-glycerol + (9Z-octadecenoyl)-sn-glycero-3-phosphocholine. The enzyme catalyses a 2-acylglycerol + a 1,2-diacyl-sn-glycero-3-phosphocholine = a 1,2-diacylglycerol + a 2-acyl-sn-glycero-3-phosphocholine. It catalyses the reaction a 2-acylglycerol + a 1,2-diacyl-sn-glycero-3-phosphocholine = a 1,2-diacylglycerol + a 1-acyl-sn-glycero-3-phosphocholine. The catalysed reaction is 2-hexadecanoylglycerol + 1,2-di-(9Z-octadecenoyl)-sn-glycero-3-phosphocholine = 1-(9Z)-octadecenoyl-2-hexadecanoylglycerol + (9Z-octadecenoyl)-sn-glycero-3-phosphocholine. It carries out the reaction 1-O-alkylglycerol + a 1,2-diacyl-sn-glycero-3-phosphocholine = 1-O-alkyl-3-acylglycerol + a 1-acyl-sn-glycero-3-phosphocholine. The enzyme catalyses 1-O-alkylglycerol + a 1,2-diacyl-sn-glycero-3-phosphocholine = 1-O-alkyl-3-acylglycerol + a 2-acyl-sn-glycero-3-phosphocholine. It catalyses the reaction 1-O-hexadecylglycerol + 1,2-di-(9Z-octadecenoyl)-sn-glycero-3-phosphocholine = 1-O-hexadecyl-3-(9Z)-octadecenoylglycerol + (9Z-octadecenoyl)-sn-glycero-3-phosphocholine. The catalysed reaction is 1-O-alkyl-2-acyl-sn-glycerol + a 1,2-diacyl-sn-glycero-3-phosphocholine = 1-O-alkyl-2,3-diacyl-sn-glycerol + a 2-acyl-sn-glycero-3-phosphocholine. It carries out the reaction 1-O-alkyl-2-acyl-sn-glycerol + a 1,2-diacyl-sn-glycero-3-phosphocholine = 1-O-alkyl-2,3-diacyl-sn-glycerol + a 1-acyl-sn-glycero-3-phosphocholine. The enzyme catalyses 1-O-hexadecyl-2-acetyl-sn-glycerol + 1,2-di-(9Z-octadecenoyl)-sn-glycero-3-phosphocholine = 1-O-hexadecyl-2-acetyl-3-(9Z)-octadecenoyl-sn-glycerol + (9Z-octadecenoyl)-sn-glycero-3-phosphocholine. It catalyses the reaction 1-O-hexadecyl-2-O-methyl-sn-glycerol + 1,2-di-(9Z-octadecenoyl)-sn-glycero-3-phosphocholine = 1-O-hexadecyl-2-O-methyl-3-(9Z)-octadecenoyl-sn-glycerol + (9Z-octadecenoyl)-sn-glycero-3-phosphocholine. The catalysed reaction is a 1,2-diacyl-sn-glycero-3-phosphoethanolamine + H2O = a 1-acyl-sn-glycero-3-phosphoethanolamine + a fatty acid + H(+). It carries out the reaction 1-acyl-2-(5Z,8Z,11Z,14Z)-eicosatetraenoyl-sn-glycero-3-phosphoethanolamine + H2O = a 1-acyl-sn-glycero-3-phosphoethanolamine + (5Z,8Z,11Z,14Z)-eicosatetraenoate + H(+). The enzyme catalyses a 1,2-diacyl-sn-glycero-3-phospho-(1'-sn-glycerol) + H2O = 1-acyl-sn-glycero-3-phospho-(1'-sn-glycerol) + a fatty acid + H(+). It catalyses the reaction 1-hexadecanoyl-2-(9Z-octadecenoyl)-sn-glycero-3-phospho-(1'-sn-glycerol) + H2O = 1-hexadecanoyl-sn-glycero-3-phospho-(1'-sn-glycerol) + (9Z)-octadecenoate + H(+). The catalysed reaction is a 1,2-diacyl-sn-glycero-3-phospho-(1'-sn-glycerol) + H2O = 2-acyl-sn-glycero-3-phospho-(1'-sn-glycerol) + a fatty acid + H(+). It carries out the reaction 1-hexadecanoyl-2-(9Z-octadecenoyl)-sn-glycero-3-phospho-(1'-sn-glycerol) + H2O = 2-(9Z-octadecenoyl)-sn-glycero-3-phospho-(1'-sn-glycerol) + hexadecanoate + H(+). With respect to regulation, inhibited by zinc ions at neutral pH. Zinc ions in plasma may keep the enzyme from hydrolyzing inappropriate substrates. Has dual calcium-independent phospholipase and O-acyltransferase activities with a potential role in glycerophospholipid homeostasis and remodeling of acyl groups of lipophilic alcohols present in acidic cellular compartments. Catalyzes hydrolysis of the ester bond of the fatty acyl group attached at sn-1 or sn-2 position of phospholipids (phospholipase A1 or A2 activity) and transfer it to the hydroxyl group at the first carbon of lipophilic alcohols (O-acyltransferase activity). Among preferred fatty acyl donors are phosphatidylcholines, phosphatidylethanolamines, phosphatidylglycerols and phosphatidylserines. Favors sn-2 over sn-1 deacylation of unsaturated fatty acyl groups of phosphatidylcholines, phosphatidylethanolamines, and phosphatidylglycerols. Among preferred fatty acyl acceptors are natural lipophilic alcohols including short-chain ceramide N-acetyl-sphingosine (C2 ceramide), alkylacylglycerols, monoacylglycerols, and acylethanolamides such as anandamide and oleoylethanolamide. Selectively hydrolyzes the sn-1 fatty acyl group of truncated oxidized phospholipids and may play a role in detoxification of reactive oxidized phospholipids during oxidative stress. Required for normal phospholipid degradation in alveolar macrophages with potential implications in the clearance of pulmonary surfactant, which is mainly composed of dipalmitoylphosphatidylcholine (1,2-dihexadecanoyl-sn-glycero-3-phosphocholine). Involved in the first step of bis(monoacylglycero)phosphate (BMP) de novo synthesis from phosphatidylglycerol (1,2-diacyl-sn-glycero-3-phospho-(1'-sn-glycerol), PG). BMP is an important player in cargo sorting and degradation, regulation of cellular cholesterol levels and intercellular communication. At neutral pH, hydrolyzes the sn-1 fatty acyl group of the lysophosphatidylcholines. In Homo sapiens (Human), this protein is Lysosomal phospholipase A and acyltransferase.